We begin with the raw amino-acid sequence, 183 residues long: Photosystem I assembly protein Ycf4 (183 aa).

2 consecutive transmembrane segments (helical) span residues 21–43 (YWWASVLLLGGSSFLVVGLSSRL) and 58–80 (FIPQGLVMCFYGLVGLVVSTYLW).

This sequence belongs to the Ycf4 family.

The protein localises to the plastid. It is found in the chloroplast thylakoid membrane. In terms of biological role, seems to be required for the assembly of the photosystem I complex. The protein is Photosystem I assembly protein Ycf4 of Nephroselmis olivacea (Green alga).